A 211-amino-acid chain; its full sequence is Protein CHLORORESPIRATORY REDUCTION 41, chloroplastic (211 aa).

Residues M1–K38 constitute a chloroplast transit peptide. Positions A136–M163 form a coiled coil.

Biogenesis factor component of the plastidial NDH subcomplex A.

The protein localises to the plastid. Its subcellular location is the chloroplast. It is found in the chloroplast stroma. Its function is as follows. Required for both formation and activity of the chloroplast NAD(P)H dehydrogenase (NDH) complex of the photosynthetic electron transport chain. Functions in assembly or stabilization of the NDH complex; probably involved, together with NdhO and NdhH, in the formation of an NDH subcomplex A assembly intermediate (NAI500). The polypeptide is Protein CHLORORESPIRATORY REDUCTION 41, chloroplastic (Arabidopsis thaliana (Mouse-ear cress)).